We begin with the raw amino-acid sequence, 353 residues long: Alternative oxidase, mitochondrial (353 aa).

The tract at residues 25 to 45 (FRSTDDEDENNPSTELATDTT) is disordered. Polar residues predominate over residues 35 to 45 (NPSTELATDTT). Residues 153-173 (FLFLESIAGVPGMVAGMIRHL) form a helical membrane-spanning segment. Positions 157, 196, and 199 each coordinate Fe cation. A helical membrane pass occupies residues 217–237 (LLIGQIIFYNLFFISYLISPA). Glu-247, Glu-301, and His-304 together coordinate Fe cation.

It belongs to the alternative oxidase family. Fe cation is required as a cofactor.

The protein localises to the mitochondrion inner membrane. Catalyzes cyanide-resistant oxygen consumption. May increase respiration when the cytochrome respiratory pathway is restricted, or in response to low temperatures. This is Alternative oxidase, mitochondrial (AOX) from Yarrowia lipolytica (strain CLIB 122 / E 150) (Yeast).